A 65-amino-acid polypeptide reads, in one-letter code: Toxin Co52 (65 aa).

One can recognise an LCN-type CS-alpha/beta domain in the interval 2–65; the sequence is EDGYLVDKTG…PTWPLPNKTC (64 aa). 4 cysteine pairs are disulfide-bonded: Cys12–Cys65, Cys16–Cys41, Cys25–Cys46, and Cys29–Cys48.

Expressed by the venom gland.

Its subcellular location is the secreted. Functionally, beta toxins bind voltage-independently at site-4 of sodium channels (Nav) and shift the voltage of activation toward more negative potentials thereby affecting sodium channel activation and promoting spontaneous and repetitive firing. Not toxic to mice, chicks, crickets or woodlice (at 5 ug). This Centruroides ornatus (Scorpion) protein is Toxin Co52.